Reading from the N-terminus, the 314-residue chain is 2,3-dihydroxyphenylpropionate/2,3-dihydroxicinnamic acid 1,2-dioxygenase (314 aa).

Histidine 115 serves as the catalytic Proton donor. Catalysis depends on histidine 179, which acts as the Proton acceptor.

It belongs to the LigB/MhpB extradiol dioxygenase family. As to quaternary structure, homotetramer. Fe(2+) is required as a cofactor.

The catalysed reaction is 3-(2,3-dihydroxyphenyl)propanoate + O2 = (2Z,4E)-2-hydroxy-6-oxonona-2,4-dienedioate + H(+). It carries out the reaction (2E)-3-(2,3-dihydroxyphenyl)prop-2-enoate + O2 = (2Z,4E,7E)-2-hydroxy-6-oxonona-2,4,7-trienedioate + H(+). It functions in the pathway aromatic compound metabolism; 3-phenylpropanoate degradation. Functionally, catalyzes the non-heme iron(II)-dependent oxidative cleavage of 2,3-dihydroxyphenylpropionic acid and 2,3-dihydroxicinnamic acid into 2-hydroxy-6-ketononadienedioate and 2-hydroxy-6-ketononatrienedioate, respectively. The protein is 2,3-dihydroxyphenylpropionate/2,3-dihydroxicinnamic acid 1,2-dioxygenase of Escherichia coli O81 (strain ED1a).